A 238-amino-acid chain; its full sequence is Thiamine import ATP-binding protein ThiQ (238 aa).

One can recognise an ABC transporter domain in the interval 1–234; sequence MSSTALAVKG…RDIAAINRFL (234 aa). 36 to 43 serves as a coordination point for ATP; that stretch reads GASGSGKS.

Belongs to the ABC transporter superfamily. Thiamine importer (TC 3.A.1.19.1) family. In terms of assembly, the complex is composed of two ATP-binding proteins (ThiQ), two transmembrane proteins (ThiP) and a solute-binding protein (ThiB).

The protein localises to the cell inner membrane. The enzyme catalyses thiamine(out) + ATP + H2O = thiamine(in) + ADP + phosphate + H(+). In terms of biological role, part of the ABC transporter complex ThiBPQ involved in thiamine import. Responsible for energy coupling to the transport system. This is Thiamine import ATP-binding protein ThiQ from Rhizobium meliloti (strain 1021) (Ensifer meliloti).